A 143-amino-acid polypeptide reads, in one-letter code: Transcriptional regulator MraZ (143 aa).

SpoVT-AbrB domains follow at residues 5–47 and 76–119; these read EYQH…PMSE and ATEC…SKEI.

The protein belongs to the MraZ family. As to quaternary structure, forms oligomers.

Its subcellular location is the cytoplasm. It is found in the nucleoid. The polypeptide is Transcriptional regulator MraZ (Bacillus licheniformis (strain ATCC 14580 / DSM 13 / JCM 2505 / CCUG 7422 / NBRC 12200 / NCIMB 9375 / NCTC 10341 / NRRL NRS-1264 / Gibson 46)).